Reading from the N-terminus, the 82-residue chain is Myrmicitoxin(1)-Pm3a (82 aa).

An N-terminal signal peptide occupies residues 1–23; that stretch reads MEIPKLLYIAVIAIGLSGSLTCA. Positions 24 to 59 are excised as a propeptide; sequence TPLANPLADPEAEAEAKATAEATAEAIAEALAEPEP. A Leucine amide modification is found at Leu81.

This sequence belongs to the formicidae venom clade 1 family. As to expression, expressed by the venom gland.

The protein resides in the secreted. Functionally, toxin that causes a slowly developing temporary paralysis when intrathoracically injected into insects (blowflies). Does not cause spontaneous nocifensive behaviors by intraplantar injection in mice. In Pogonomyrmex maricopa (Maricopa harvester ant), this protein is Myrmicitoxin(1)-Pm3a.